The chain runs to 283 residues: MATRLDGRAVSKKILADLKQTIAELAQHDVTPTLAVVLVGSNPASEVYVRNKQRRAEDIGVRSLMFRMPEATTQADLLAKVAELNHDPDIDAILVQLPLPAGLDEQAVIDAIDPDKDVDGFSPVSVGRLWANEPTVVASTPYGIMALLDAYDIDVAGKRVVIIGRSNIVGRPLAGLMVNHDATVTIAHSKTRDLKQLAKEADILVVAVGVPHFIGADAVKPGAVVIDVGISRGADGKLLGDVDEAAVAPIASAITPVPGGVGPMTIASLMAQTVTLAKRRANG.

Residues 164-166 (GRS), Ser-189, and Ile-230 each bind NADP(+).

The protein belongs to the tetrahydrofolate dehydrogenase/cyclohydrolase family. As to quaternary structure, homodimer.

The enzyme catalyses (6R)-5,10-methylene-5,6,7,8-tetrahydrofolate + NADP(+) = (6R)-5,10-methenyltetrahydrofolate + NADPH. The catalysed reaction is (6R)-5,10-methenyltetrahydrofolate + H2O = (6R)-10-formyltetrahydrofolate + H(+). It participates in one-carbon metabolism; tetrahydrofolate interconversion. Its function is as follows. Catalyzes the oxidation of 5,10-methylenetetrahydrofolate to 5,10-methenyltetrahydrofolate and then the hydrolysis of 5,10-methenyltetrahydrofolate to 10-formyltetrahydrofolate. This Lacticaseibacillus casei (strain BL23) (Lactobacillus casei) protein is Bifunctional protein FolD.